The following is a 288-amino-acid chain: ATP synthase gamma chain (288 aa).

It belongs to the ATPase gamma chain family. F-type ATPases have 2 components, CF(1) - the catalytic core - and CF(0) - the membrane proton channel. CF(1) has five subunits: alpha(3), beta(3), gamma(1), delta(1), epsilon(1). CF(0) has three main subunits: a, b and c.

It is found in the cell inner membrane. Its function is as follows. Produces ATP from ADP in the presence of a proton gradient across the membrane. The gamma chain is believed to be important in regulating ATPase activity and the flow of protons through the CF(0) complex. This Laribacter hongkongensis (strain HLHK9) protein is ATP synthase gamma chain.